The sequence spans 128 residues: Large ribosomal subunit protein uL22 (128 aa).

This sequence belongs to the universal ribosomal protein uL22 family. As to quaternary structure, part of the 50S ribosomal subunit.

In terms of biological role, this protein binds specifically to 23S rRNA; its binding is stimulated by other ribosomal proteins, e.g. L4, L17, and L20. It is important during the early stages of 50S assembly. It makes multiple contacts with different domains of the 23S rRNA in the assembled 50S subunit and ribosome. The globular domain of the protein is located near the polypeptide exit tunnel on the outside of the subunit, while an extended beta-hairpin is found that lines the wall of the exit tunnel in the center of the 70S ribosome. This Nitrobacter hamburgensis (strain DSM 10229 / NCIMB 13809 / X14) protein is Large ribosomal subunit protein uL22.